Here is an 855-residue protein sequence, read N- to C-terminus: Beclin-1-like protein B (855 aa).

Disordered stretches follow at residues Phe-92–Ser-212, Leu-236–Asn-271, Ala-294–Arg-380, and Val-407–Pro-475. Composition is skewed to low complexity over residues Thr-99–Leu-123 and Gln-131–Thr-143. Residues Phe-144 to Thr-156 are compositionally biased toward polar residues. Low complexity predominate over residues His-177–Ser-200. Over residues Ala-294–Ser-348 the composition is skewed to low complexity. Composition is skewed to polar residues over residues Leu-368–Gln-377 and Ser-413–Pro-445. Over residues Leu-446 to Gln-474 the composition is skewed to low complexity. The stretch at Glu-538–Glu-595 forms a coiled coil. The tract at residues Leu-826–Asn-855 is disordered.

This sequence belongs to the beclin family.

It is found in the endosome membrane. In terms of biological role, involved in autophagy. May be required to recruit the atg8-phosphatidylinositol conjugate and the atg12-atg5 conjugate to the pre-autophagosomal structure. The sequence is that of Beclin-1-like protein B (atg6B) from Dictyostelium discoideum (Social amoeba).